Here is a 643-residue protein sequence, read N- to C-terminus: Phosphomethylpyrimidine synthase (643 aa).

Substrate is bound by residues asparagine 248, methionine 277, tyrosine 306, histidine 342, 362-364, 403-406, and glutamate 442; these read SRG and DGLR. Residue histidine 446 participates in Zn(2+) binding. Substrate is bound at residue tyrosine 469. Histidine 510 contacts Zn(2+). Positions 590, 593, and 598 each coordinate [4Fe-4S] cluster.

This sequence belongs to the ThiC family. As to quaternary structure, homodimer. [4Fe-4S] cluster serves as cofactor.

The enzyme catalyses 5-amino-1-(5-phospho-beta-D-ribosyl)imidazole + S-adenosyl-L-methionine = 4-amino-2-methyl-5-(phosphooxymethyl)pyrimidine + CO + 5'-deoxyadenosine + formate + L-methionine + 3 H(+). Its pathway is cofactor biosynthesis; thiamine diphosphate biosynthesis. Catalyzes the synthesis of the hydroxymethylpyrimidine phosphate (HMP-P) moiety of thiamine from aminoimidazole ribotide (AIR) in a radical S-adenosyl-L-methionine (SAM)-dependent reaction. This is Phosphomethylpyrimidine synthase from Burkholderia mallei (strain NCTC 10247).